A 487-amino-acid chain; its full sequence is Glutamyl-tRNA(Gln) amidotransferase subunit A (487 aa).

Catalysis depends on charge relay system residues lysine 79 and serine 154. The active-site Acyl-ester intermediate is serine 178.

Belongs to the amidase family. GatA subfamily. As to quaternary structure, heterotrimer of A, B and C subunits.

The catalysed reaction is L-glutamyl-tRNA(Gln) + L-glutamine + ATP + H2O = L-glutaminyl-tRNA(Gln) + L-glutamate + ADP + phosphate + H(+). In terms of biological role, allows the formation of correctly charged Gln-tRNA(Gln) through the transamidation of misacylated Glu-tRNA(Gln) in organisms which lack glutaminyl-tRNA synthetase. The reaction takes place in the presence of glutamine and ATP through an activated gamma-phospho-Glu-tRNA(Gln). The chain is Glutamyl-tRNA(Gln) amidotransferase subunit A from Roseiflexus sp. (strain RS-1).